The sequence spans 140 residues: Prepilin peptidase-dependent protein A (140 aa).

The propeptide occupies 1–23; it reads MLLLKASAICGKGNEGKRNKKGG. Residue F24 is modified to N-methylphenylalanine. The chain crosses the membrane as a helical span at residues 24–44; sequence FTLIELTVVLAIMAIILMVIA.

Its subcellular location is the membrane. In terms of biological role, not yet known. The protein is Prepilin peptidase-dependent protein A (ppdA) of Clostridium perfringens (strain 13 / Type A).